Here is a 59-residue protein sequence, read N- to C-terminus: Large ribosomal subunit protein bL32 (59 aa).

The segment at 1 to 25 (MAVQQNKKSPSKRGMHRAHDFLTAP) is disordered.

The protein belongs to the bacterial ribosomal protein bL32 family.

The protein is Large ribosomal subunit protein bL32 of Azoarcus sp. (strain BH72).